A 410-amino-acid chain; its full sequence is MNDDKKDFVGRDLYQLIRNAKDKIKIDYKFWYTQPVPKINDEFDENVNEPFISDNKVEDVRKEEYKLPSGYAWCVCDITKENDRSDIYNLLTDNYVEDDDNVFRFNYSSEFLLWALSSPNYVKNWHIGVKYESTNKLVGFISAIPIDMCVNKNIIKMAEVNFLCVHKSLRSKRLAPVLIKEITRRINLESIWQAIYTAGVYLPKPISTARYFHRSINVKKLIEIGFSCLNTRLTMSRAIKLYRIDDTLNIKNLRLMKKKDIDGLQKLLNEHLKQYNLHAIFSKEDVAHWFTPIDQVIYTYVNEENGEIKDLISFYSLPSKVLGNNKYNILNAAFSFYNITTTTTFKNLIQDAICLAKRNNFDVFNALEVMDNYSVFQDLKFGEGDGSLKYYLYNWKCASCHPSKIGIVLL.

Positions 30, 31, 162, 163, 164, 165, 171, 173, 174, and 175 each coordinate tetradecanoyl-CoA.

Belongs to the NMT family. In terms of assembly, heterodimer composed of NMT and AK2; AK2 myristoylation stabilizes the complex.

It is found in the cytoplasm. It catalyses the reaction N-terminal glycyl-[protein] + tetradecanoyl-CoA = N-tetradecanoylglycyl-[protein] + CoA + H(+). Functionally, adds a myristoyl group to the N-terminal glycine residue of certain cellular proteins. Myristoylates adenylate kinase AK2. During the asexual blood stage, may myristoylate proteins such as ARO, CDPK1 and GAP45. Probably by mediating protein myristoylation, plays a role in the assembly of the inner membrane complex during the early stages of schizogony and in the formation of rhoptries in the late stages and thus merozoite egress. The chain is Glycylpeptide N-tetradecanoyltransferase from Plasmodium falciparum (isolate 3D7).